A 317-amino-acid polypeptide reads, in one-letter code: Nuclear distribution protein nudE homolog (317 aa).

Residues 29 to 180 are a coiled coil; that stretch reads TDVKQEYDEF…LKQELNVKSR (152 aa). The tract at residues 186–205 is disordered; that stretch reads NGTSVPTANDTNTVNSSMNS.

It belongs to the nudE family.

The protein localises to the cytoplasm. The protein resides in the cytoskeleton. It is found in the microtubule organizing center. Its subcellular location is the centrosome. It localises to the spindle. Its function is as follows. Chaperone protein with functions in nuclear localization. Required for centrosome duplication and formation and function of the mitotic spindle. In postmitotic neurons, acts with nudC downstream of dar1 to ensure correct positioning of the nuclei in primary dendrites and as a consequence, is required for determining multipolar neuron morphology. This Drosophila melanogaster (Fruit fly) protein is Nuclear distribution protein nudE homolog.